The following is a 142-amino-acid chain: Hemoglobin subunit alpha-A (142 aa).

One can recognise a Globin domain in the interval 2–142 (VLSAADKNNV…VGTVLTAKYR (141 aa)). His-59 provides a ligand contact to O2. His-88 is a heme b binding site.

It belongs to the globin family. Heterotetramer of two alpha chains and two beta chains. Red blood cells.

In terms of biological role, involved in oxygen transport from the lung to the various peripheral tissues. The chain is Hemoglobin subunit alpha-A (HBAA) from Meleagris gallopavo (Wild turkey).